The following is a 557-amino-acid chain: Syntaxin-binding protein 4 (557 aa).

Phosphoserine occurs at positions 10 and 12. A PDZ domain is found at 19-105 (AFRVITVTKE…RSESPWEIAF (87 aa)). Residue Ser99 is modified to Phosphoserine; by PKB/AKT2. Low complexity predominate over residues 142–154 (PSETLLPKTSSTP). The tract at residues 142–214 (PSETLLPKTS…SGPQGKISLN (73 aa)) is disordered. The span at 179 to 194 (SPITSLDNSPADTSNA) shows a compositional bias: polar residues. Phosphoserine is present on Ser216. Positions 298 to 408 (ADEVGKLRQE…NKESVQDLRK (111 aa)) form a coiled coil. The residue at position 467 (Ser467) is a Phosphoserine. Residues 500-533 (DCLPYGWEEAYTADGIKYFINHVTQTTSWIHPVM) form the WW domain.

As to quaternary structure, interacts with STX4A. In terms of processing, phosphorylated on Ser-99 by PKB/AKT2 after insulin treatment. Phosphorylation on Ser-99 abolishes the interaction with STX4A. In terms of tissue distribution, detected in skeletal muscle, heart, testis, adipocytes and pancreatic islet cells.

The protein localises to the cytoplasm. In terms of biological role, plays a role in the translocation of transport vesicles from the cytoplasm to the plasma membrane. Inhibits the translocation of SLC2A4 from intracellular vesicles to the plasma membrane by STX4A binding and preventing the interaction between STX4A and VAMP2. Stimulation with insulin disrupts the interaction with STX4A, leading to increased levels of SLC2A4 at the plasma membrane. May also play a role in the regulation of insulin release by pancreatic beta cells after stimulation by glucose. The polypeptide is Syntaxin-binding protein 4 (Stxbp4) (Mus musculus (Mouse)).